The chain runs to 219 residues: 3,4-dihydroxy-2-butanone 4-phosphate synthase (219 aa).

D-ribulose 5-phosphate-binding positions include 28–29, D33, 140–144, and E164; these read RE and REGHT. E29 serves as a coordination point for Mg(2+). H143 lines the Mg(2+) pocket.

Belongs to the DHBP synthase family. In terms of assembly, homodimer. The cofactor is Mg(2+). Mn(2+) is required as a cofactor.

The enzyme catalyses D-ribulose 5-phosphate = (2S)-2-hydroxy-3-oxobutyl phosphate + formate + H(+). Its pathway is cofactor biosynthesis; riboflavin biosynthesis; 2-hydroxy-3-oxobutyl phosphate from D-ribulose 5-phosphate: step 1/1. Catalyzes the conversion of D-ribulose 5-phosphate to formate and 3,4-dihydroxy-2-butanone 4-phosphate. This is 3,4-dihydroxy-2-butanone 4-phosphate synthase from Methanocorpusculum labreanum (strain ATCC 43576 / DSM 4855 / Z).